The following is a 105-amino-acid chain: Integration host factor subunit alpha (105 aa).

This sequence belongs to the bacterial histone-like protein family. As to quaternary structure, heterodimer of an alpha and a beta chain.

This protein is one of the two subunits of integration host factor, a specific DNA-binding protein that functions in genetic recombination as well as in transcriptional and translational control. The chain is Integration host factor subunit alpha from Xanthobacter autotrophicus (strain ATCC BAA-1158 / Py2).